The following is a 618-amino-acid chain: Pyranose 2-oxidase (618 aa).

His-170 is modified (tele-8alpha-FAD histidine). 2 residues coordinate substrate: Gln-441 and His-443. Catalysis depends on His-540, which acts as the Proton acceptor. Asn-583 is an active-site residue.

The protein belongs to the GMC oxidoreductase family. In terms of assembly, homotetramer. The cofactor is FAD.

It carries out the reaction D-glucose + O2 = 2-dehydro-D-glucose + H2O2. Functionally, catalyzes the oxidation of various aldopyranoses and disaccharides on carbon-2 to the corresponding 2-keto sugars concomitant with the reduction of O(2) to H(2)O(2). The polypeptide is Pyranose 2-oxidase (p2ox) (Lyophyllum shimeji (Hon-shimeji)).